Reading from the N-terminus, the 173-residue chain is Putative MgpC-like protein MPN_092 (173 aa).

It belongs to the MgpC family.

This chain is Putative MgpC-like protein MPN_092, found in Mycoplasma pneumoniae (strain ATCC 29342 / M129 / Subtype 1) (Mycoplasmoides pneumoniae).